Here is a 190-residue protein sequence, read N- to C-terminus: CD70 antigen (190 aa).

Over Met-1–Ser-17 the chain is Cytoplasmic. Residues Ile-18 to Gly-38 form a helical membrane-spanning segment. Residues Gln-39–Pro-190 lie on the Extracellular side of the membrane. In terms of domain architecture, THD spans Asp-52 to Val-188. 2 N-linked (GlcNAc...) asparagine glycosylation sites follow: Asn-59 and Asn-110. Disulfide bonds link Cys-111/Cys-148 and Cys-130/Cys-165. N-linked (GlcNAc...) asparagine glycosylation occurs at Asn-167.

Belongs to the tumor necrosis factor family. Homotrimer. In terms of processing, N-glycosylated.

The protein localises to the cell membrane. Functionally, expressed at the plasma membrane of B cells, it is the ligand of the CD27 receptor which is specifically expressed at the surface of T cells. The CD70-CD27 signaling pathway mediates antigen-specific T cell activation and expansion which in turn provides immune surveillance of B cells. The sequence is that of CD70 antigen from Sus scrofa (Pig).